Here is a 481-residue protein sequence, read N- to C-terminus: Polygalacturonase QRT3 (481 aa).

The N-terminal stretch at 1-27 (MELRKSQVAMPVFLAIMSLMVSQVVFA) is a signal peptide. 3 PbH1 repeats span residues 203 to 226 (SLRT…LVKS), 261 to 282 (GNDN…MVSG), and 356 to 377 (IRGV…QIVQ). Residues N415 and N455 are each glycosylated (N-linked (GlcNAc...) asparagine).

It belongs to the glycosyl hydrolase 28 family. In terms of tissue distribution, expressed in the tapetum cells in the anthers and in the ovules of open flowers.

The protein resides in the secreted. The protein localises to the cell wall. It catalyses the reaction (1,4-alpha-D-galacturonosyl)n+m + H2O = (1,4-alpha-D-galacturonosyl)n + (1,4-alpha-D-galacturonosyl)m.. Functionally, polygalacturonase required for degrading the pollen mother cell wall during microspore development. This Arabidopsis thaliana (Mouse-ear cress) protein is Polygalacturonase QRT3 (QRT3).